Here is a 165-residue protein sequence, read N- to C-terminus: Mediator of RNA polymerase II transcription subunit 10 (165 aa).

Disordered stretches follow at residues 54–81 (SLHT…DPAL) and 143–165 (LRGE…RERG). Positions 62–77 (TASTTAPNQYQSTNPN) are enriched in polar residues.

It belongs to the Mediator complex subunit 10 family. In terms of assembly, component of the Mediator complex.

It localises to the nucleus. Component of the Mediator complex, a coactivator involved in the regulated transcription of nearly all RNA polymerase II-dependent genes. Mediator functions as a bridge to convey information from gene-specific regulatory proteins to the basal RNA polymerase II transcription machinery. Mediator is recruited to promoters by direct interactions with regulatory proteins and serves as a scaffold for the assembly of a functional preinitiation complex with RNA polymerase II and the general transcription factors. This Emericella nidulans (strain FGSC A4 / ATCC 38163 / CBS 112.46 / NRRL 194 / M139) (Aspergillus nidulans) protein is Mediator of RNA polymerase II transcription subunit 10 (nut2).